The following is a 466-amino-acid chain: Lipase 2 (466 aa).

Positions 1–16 (MKGLVFLLGLLPTIYA) are cleaved as a signal peptide. Cysteines 112 and 285 form a disulfide. The active-site Charge relay system is the Ser196. Asn231, Asn319, and Asn331 each carry an N-linked (GlcNAc...) asparagine glycan. Catalysis depends on charge relay system residues Asp348 and His381. Cys364 and Cys409 are disulfide-bonded. N-linked (GlcNAc...) asparagine glycans are attached at residues Asn422 and Asn451.

This sequence belongs to the AB hydrolase superfamily. Lipase family. Class Lip subfamily.

Its subcellular location is the secreted. It catalyses the reaction a triacylglycerol + H2O = a diacylglycerol + a fatty acid + H(+). In terms of biological role, secreted lipase that is able to hydrolyze both the neutral triacylglycerols and the monopalmitate ester Tween 40, allowing the use of hydrolyzed products as carbon sources. Has broad lipolytic activity, which may be important for colonization and subsequent infection, therefore contributing to the persistence and virulence in human tissue. My be important for alimentary tract colonization, but not oral infection. Facilitates invasive disease via lipid-based suppression of the IL-17 response. Inhibits IL-17 production indirectly by suppressing IL-23 production by tissue-resident dendritic cells. In Candida albicans (strain SC5314 / ATCC MYA-2876) (Yeast), this protein is Lipase 2.